Here is a 157-residue protein sequence, read N- to C-terminus: Baculoviral IAP repeat-containing protein 5.2-A (157 aa).

A BIR repeat occupies 31-101; sequence RLRTFSNWPF…KHSPSCLFIA (71 aa). Phosphothreonine; by CDK1 is present on threonine 47. Positions 70, 73, 90, and 97 each coordinate Zn(2+).

It belongs to the IAP family. Component of the CPC at least composed of survivin/birc5, incenp, cdca8/borealin and/or cdca9/dasra-A, and aurkb/aurora-B. Interacts directly with incenp (via N-terminus). Interacts with rxra; the interaction is stronger in the absence of 9-cis retinoic acids. In terms of processing, ubiquitination is required for centrosome-targeting. In terms of tissue distribution, highly expressed in vascular endothelial cells of tadpoles.

The protein resides in the cytoplasm. The protein localises to the nucleus. It is found in the chromosome. Its subcellular location is the centromere. It localises to the cytoskeleton. The protein resides in the spindle. Component of the chromosomal passenger complex (CPC), a complex that acts as a key regulator of mitosis. The CPC complex has essential functions at the centromere in ensuring correct chromosome alignment and segregation and is required for chromatin-induced microtubule stabilization and spindle assembly. Does not appear to exhibit anti-apoptotic activity. Plays a role in increasing blood vessel size during development. The sequence is that of Baculoviral IAP repeat-containing protein 5.2-A (birc5.2-a) from Xenopus laevis (African clawed frog).